Consider the following 205-residue polypeptide: Outer-membrane lipoprotein LolB (205 aa).

The N-terminal stretch at 1 to 17 is a signal peptide; the sequence is MRLRLFLAASALALLSG. The N-palmitoyl cysteine moiety is linked to residue Cys18. Cys18 is lipidated: S-diacylglycerol cysteine.

It belongs to the LolB family. In terms of assembly, monomer.

The protein localises to the cell outer membrane. Its function is as follows. Plays a critical role in the incorporation of lipoproteins in the outer membrane after they are released by the LolA protein. This chain is Outer-membrane lipoprotein LolB, found in Pseudomonas paraeruginosa (strain DSM 24068 / PA7) (Pseudomonas aeruginosa (strain PA7)).